The primary structure comprises 461 residues: ADP-specific phosphofructokinase (461 aa).

The 457-residue stretch at 1–457 (MVRELLEKAR…FASYLAMLKE (457 aa)) folds into the ADPK domain. Mg(2+) contacts are provided by Glu-268, Glu-298, and Asp-441. Residue Asp-441 is the Proton acceptor of the active site.

Belongs to the carbohydrate kinase PfkC family. Mg(2+) serves as cofactor.

Its subcellular location is the cytoplasm. The enzyme catalyses beta-D-fructose 6-phosphate + ADP = beta-D-fructose 1,6-bisphosphate + AMP + H(+). It participates in carbohydrate degradation; glycolysis. In terms of biological role, catalyzes the phosphorylation of fructose 6-phosphate to fructose 1,6-bisphosphate using ADP as the phosphate donor. The polypeptide is ADP-specific phosphofructokinase (Thermococcus zilligii).